A 336-amino-acid chain; its full sequence is MAMMAASHDDDTVDGLATAVRGGDRAALPRAITLVESTRPDHREQAQQLLLRLLPDSGNAHRVGITGVPGVGKSTAIEALGMHLIERGHRVAVLAVDPSSTRTGGSILGDKTRMARLAVHPNAYIRPSPTSGTLGGVTRATRETVVLLEAAGFDVILIETVGVGQSEVAVANMVDTFVLLTLARTGDQLQGIKKGVLELADIVVVNKADGEHHKEARLAARELSAAIRLIYPREALWRPPVLTMSAVEGRGLAELWDTVERHRQVLTGAGEFDARRRDQQVDWTWQLVRDAVLDRVWSNPTVRKVRSELERRVRAGELTPALAAQQILEIANLTDR.

Residues 67–75 (GVPGVGKST), aspartate 209, and 245–247 (SAV) contribute to the GTP site.

It belongs to the SIMIBI class G3E GTPase family. ArgK/MeaB subfamily. Homodimer.

Probable GTPase. May also bind and hydrolyze ATP. May function as chaperone. In Mycobacterium tuberculosis (strain CDC 1551 / Oshkosh), this protein is Probable GTPase MT1543.